The primary structure comprises 322 residues: Cytochrome c biogenesis protein CcsA (322 aa).

Transmembrane regions (helical) follow at residues 15–35 (FSIVSIIITMRLISFFLVDGI), 45–65 (GMIVTFLCLTGLLVTRWTYSG), 72–92 (LYESLIFLSWSFSLIHIVPYF), 98–120 (YLSTITGSSVVFTQGFTTSGLLT), 144–164 (MILGYASLLCGSLLSIALLVI), 226–246 (GISLGFIFLTIGILSGAVWAN), 253–273 (WNWDPKETWAFITWIIFAIYL), and 287–307 (AIVASIGFLIIWICYFGVNLL).

It belongs to the CcmF/CycK/Ccl1/NrfE/CcsA family. In terms of assembly, may interact with Ccs1.

It is found in the plastid. The protein localises to the chloroplast thylakoid membrane. Its function is as follows. Required during biogenesis of c-type cytochromes (cytochrome c6 and cytochrome f) at the step of heme attachment. The protein is Cytochrome c biogenesis protein CcsA of Coffea arabica (Arabian coffee).